The chain runs to 256 residues: Peroxisomal membrane protein PMP30A (256 aa).

The protein belongs to the peroxin-11 family.

It localises to the peroxisome membrane. Involved in peroxisomal proliferation. Could participate in peroxisomal elongation or fission. May be involved in parceling of peroxisomes into regular quanta. This Candida boidinii (Yeast) protein is Peroxisomal membrane protein PMP30A (PEX11A).